The sequence spans 450 residues: tRNA modification GTPase MnmE (450 aa).

Residues Arg20, Glu78, and Lys117 each contribute to the (6S)-5-formyl-5,6,7,8-tetrahydrofolate site. The TrmE-type G domain occupies 211–372 (GLRMVIVGKP…LEESIYRETQ (162 aa)). Asn221 lines the K(+) pocket. GTP-binding positions include 221 to 226 (NVGKST), 240 to 246 (TDIPGTT), 265 to 268 (DTAG), 326 to 329 (NKVD), and 353 to 355 (SAL). Position 225 (Ser225) interacts with Mg(2+). Residues Thr240, Ile242, and Thr245 each coordinate K(+). Thr246 lines the Mg(2+) pocket. Lys450 is a binding site for (6S)-5-formyl-5,6,7,8-tetrahydrofolate.

The protein belongs to the TRAFAC class TrmE-Era-EngA-EngB-Septin-like GTPase superfamily. TrmE GTPase family. Homodimer. Heterotetramer of two MnmE and two MnmG subunits. The cofactor is K(+).

Its subcellular location is the cytoplasm. Exhibits a very high intrinsic GTPase hydrolysis rate. Involved in the addition of a carboxymethylaminomethyl (cmnm) group at the wobble position (U34) of certain tRNAs, forming tRNA-cmnm(5)s(2)U34. This Thermotoga maritima (strain ATCC 43589 / DSM 3109 / JCM 10099 / NBRC 100826 / MSB8) protein is tRNA modification GTPase MnmE.